A 159-amino-acid chain; its full sequence is Ribosomal RNA large subunit methyltransferase H (159 aa).

Residues L76, G108, and F127–L132 contribute to the S-adenosyl-L-methionine site.

The protein belongs to the RNA methyltransferase RlmH family. In terms of assembly, homodimer.

The protein localises to the cytoplasm. It catalyses the reaction pseudouridine(1915) in 23S rRNA + S-adenosyl-L-methionine = N(3)-methylpseudouridine(1915) in 23S rRNA + S-adenosyl-L-homocysteine + H(+). Its function is as follows. Specifically methylates the pseudouridine at position 1915 (m3Psi1915) in 23S rRNA. The polypeptide is Ribosomal RNA large subunit methyltransferase H (Listeria monocytogenes serotype 4a (strain HCC23)).